Here is a 177-residue protein sequence, read N- to C-terminus: Ribosome maturation factor RimP (177 aa).

It belongs to the RimP family.

Its subcellular location is the cytoplasm. In terms of biological role, required for maturation of 30S ribosomal subunits. This chain is Ribosome maturation factor RimP, found in Methylibium petroleiphilum (strain ATCC BAA-1232 / LMG 22953 / PM1).